The sequence spans 206 residues: Small ribosomal subunit protein uS4 (206 aa).

The S4 RNA-binding domain occupies 96–156; the sequence is GRLDNVVYRM…EKSKKQARIK (61 aa).

The protein belongs to the universal ribosomal protein uS4 family. In terms of assembly, part of the 30S ribosomal subunit. Contacts protein S5. The interaction surface between S4 and S5 is involved in control of translational fidelity.

One of the primary rRNA binding proteins, it binds directly to 16S rRNA where it nucleates assembly of the body of the 30S subunit. Functionally, with S5 and S12 plays an important role in translational accuracy. The polypeptide is Small ribosomal subunit protein uS4 (Histophilus somni (strain 129Pt) (Haemophilus somnus)).